Reading from the N-terminus, the 373-residue chain is ORC1-type DNA replication protein 2 (373 aa).

ATP contacts are provided by residues 63-67 (TGKTS), tyrosine 205, and arginine 217.

Belongs to the CDC6/cdc18 family.

Its function is as follows. Involved in regulation of DNA replication. The sequence is that of ORC1-type DNA replication protein 2 (cdc6-2) from Methanosarcina mazei (strain ATCC BAA-159 / DSM 3647 / Goe1 / Go1 / JCM 11833 / OCM 88) (Methanosarcina frisia).